The following is a 213-amino-acid chain: Small ribosomal subunit protein uS3 (213 aa).

A KH type-2 domain is found at isoleucine 38–arginine 106.

This sequence belongs to the universal ribosomal protein uS3 family. Part of the 30S ribosomal subunit. Forms a tight complex with proteins S10 and S14.

In terms of biological role, binds the lower part of the 30S subunit head. Binds mRNA in the 70S ribosome, positioning it for translation. The sequence is that of Small ribosomal subunit protein uS3 from Oleidesulfovibrio alaskensis (strain ATCC BAA-1058 / DSM 17464 / G20) (Desulfovibrio alaskensis).